The sequence spans 177 residues: Large ribosomal subunit protein uL6 (177 aa).

The protein belongs to the universal ribosomal protein uL6 family. In terms of assembly, part of the 50S ribosomal subunit.

In terms of biological role, this protein binds to the 23S rRNA, and is important in its secondary structure. It is located near the subunit interface in the base of the L7/L12 stalk, and near the tRNA binding site of the peptidyltransferase center. This is Large ribosomal subunit protein uL6 from Polynucleobacter asymbioticus (strain DSM 18221 / CIP 109841 / QLW-P1DMWA-1) (Polynucleobacter necessarius subsp. asymbioticus).